A 98-amino-acid chain; its full sequence is Endoribonuclease antitoxin GhoS (98 aa).

Monomer. In terms of processing, unlike other TA antitoxins, this protein is stable.

Its function is as follows. Antitoxin component of a type V toxin-antitoxin (TA) system. Neutralizes the toxic effects of toxin GhoT by digesting ghoT transcripts in a sequence-specific manner. In concert with GhoT is involved in reducing cell growth during antibacterial stress. This is Endoribonuclease antitoxin GhoS from Escherichia coli O157:H7.